The primary structure comprises 88 residues: Protein K3 (88 aa).

The S1 motif domain maps to 8–82 (LPNAGDVIKG…TKGYIDVNYK (75 aa)). 2 binding to host EIF2AK2/PKR regions span residues 43–53 (SVKMHMDRYVE) and 74–79 (KGYIDV).

The protein belongs to the orthopoxvirus OPG041 family. In terms of assembly, interacts with host EIF2AK2/PKR kinase.

In terms of biological role, viral mimic of eIF-2-alpha that acts as a pseudosubstrate for EIF2AK2/PKR kinase. Inhibits therefore eIF-2-alpha phosphorylation by host EIF2AK2/PKR kinase and prevents protein synthesis shutoff. Determinant of host species specificity. In Homo sapiens (Human), this protein is Protein K3 (OPG041).